The sequence spans 231 residues: NADH-ubiquinone oxidoreductase chain 4 (231 aa).

Transmembrane regions (helical) follow at residues 1–21, 34–54, 63–85, 89–111, 128–148, 169–189, and 211–231; these read PIAGSMVLAAVLLKLGGYGII, MFLPFIVLALWGAILANLTCL, IAYSSISHMGLVVAAIIIQTPWG, AMALMIAHGFTSSALFCLANTTY, ILPMTTTWWLLANLMNIATPP, TIILLGLSMLITASYSLHMFL, and LLMALHLVPLMMISMKPELII.

This sequence belongs to the complex I subunit 4 family.

The protein localises to the mitochondrion membrane. It carries out the reaction a ubiquinone + NADH + 5 H(+)(in) = a ubiquinol + NAD(+) + 4 H(+)(out). Functionally, core subunit of the mitochondrial membrane respiratory chain NADH dehydrogenase (Complex I) that is believed to belong to the minimal assembly required for catalysis. Complex I functions in the transfer of electrons from NADH to the respiratory chain. The immediate electron acceptor for the enzyme is believed to be ubiquinone. The protein is NADH-ubiquinone oxidoreductase chain 4 (MT-ND4) of Cerrophidion godmani (Porthidium godmani).